Reading from the N-terminus, the 521-residue chain is Glucose-6-phosphate isomerase (521 aa).

Glutamate 351 acts as the Proton donor in catalysis. Active-site residues include histidine 382 and lysine 491.

Belongs to the GPI family.

It is found in the cytoplasm. It catalyses the reaction alpha-D-glucose 6-phosphate = beta-D-fructose 6-phosphate. Its pathway is carbohydrate biosynthesis; gluconeogenesis. It functions in the pathway carbohydrate degradation; glycolysis; D-glyceraldehyde 3-phosphate and glycerone phosphate from D-glucose: step 2/4. In terms of biological role, catalyzes the reversible isomerization of glucose-6-phosphate to fructose-6-phosphate. This Polaromonas naphthalenivorans (strain CJ2) protein is Glucose-6-phosphate isomerase.